Here is a 455-residue protein sequence, read N- to C-terminus: Na(+)/H(+) antiporter NhaA (455 aa).

Transmembrane regions (helical) follow at residues 31 to 51, 83 to 103, 113 to 133, 141 to 161, 170 to 190, 198 to 218, 231 to 251, 309 to 329, 345 to 365, 383 to 403, and 414 to 434; these read ASGILLIVSTAAALVWANSPW, GLMSIFFFLVGLEIKREVLIG, FPLIAAVGGTVVPAVIYLLCV, GWGIPMATDIAFALGVLILLG, VFVTALAIVDDIIAVLVIALF, VSLLVALGGVGIAFGFNLLGI, IWAAVLKSGVHATVAGVLLAF, GLQPWVSFLIMPLFAFSNAGV, IGVALGLFLGKPLGIWLFAWL, IFGASWICGIGFTMSLFIASL, and SKIGTLAASLVAGVCGSVVLW.

It belongs to the NhaA Na(+)/H(+) (TC 2.A.33) antiporter family.

The protein localises to the cell inner membrane. It catalyses the reaction Na(+)(in) + 2 H(+)(out) = Na(+)(out) + 2 H(+)(in). In terms of biological role, na(+)/H(+) antiporter that extrudes sodium in exchange for external protons. This Koribacter versatilis (strain Ellin345) protein is Na(+)/H(+) antiporter NhaA.